The sequence spans 467 residues: MTNWLQKRVRLSPKETALVFEGKEETFEEISEAVKQLAGKLFALGIRKDEMVALLGKNDRMTFLLIHALQQLGAVTLFLNNRLTKKEISFQLANAEVKHVIVADSLVDKVATGISYATLAETDYEAPALLETWDLSRAASVMYTSGTTGKPKGVVQTYENHWWSAVASVLNLGLTEKDSWLCAVPIFHISGLSIMMRSVIYGIPVYLEEHFDEEKITQLLESGKISTISVVTSMLERLLKIHSGSYHPNVRTVLLGGGPASKAVLEICKQRDIPLVQSFGMTETASQIVTLPPKDALNKIGSSGKALFPAEVKIADDGEILLKGPSITPGYLHNKKATEASFVDGWFKTGDIGYLDEEGFLFVLERRSDLIISGGENIYPTEIEHVISEYEGVKEVAVIGKPDDKWGSVPVAFIVAEETFDEAELRLICETNLAGYKIPKQITIVEKLPKTASGKIQRNKLKERHSM.

The protein belongs to the ATP-dependent AMP-binding enzyme family. MenE subfamily.

The catalysed reaction is 2-succinylbenzoate + ATP + CoA = 2-succinylbenzoyl-CoA + AMP + diphosphate. It functions in the pathway quinol/quinone metabolism; 1,4-dihydroxy-2-naphthoate biosynthesis; 1,4-dihydroxy-2-naphthoate from chorismate: step 5/7. Its pathway is quinol/quinone metabolism; menaquinone biosynthesis. In terms of biological role, converts 2-succinylbenzoate (OSB) to 2-succinylbenzoyl-CoA (OSB-CoA). The polypeptide is 2-succinylbenzoate--CoA ligase (Listeria monocytogenes serotype 4b (strain F2365)).